The primary structure comprises 393 residues: 5-amino-6-(D-ribitylamino)uracil--L-tyrosine 4-hydroxyphenyl transferase (393 aa).

Residues 67–322 (VTYVINRNIN…GQWIVNHQPS (256 aa)) form the Radical SAM core domain. Residues cysteine 81, cysteine 85, and cysteine 88 each coordinate [4Fe-4S] cluster.

It belongs to the radical SAM superfamily. CofH family. In terms of assembly, consists of two subunits, CofG and CofH. It depends on [4Fe-4S] cluster as a cofactor.

The enzyme catalyses 5-amino-6-(D-ribitylamino)uracil + L-tyrosine + S-adenosyl-L-methionine = 5-amino-5-(4-hydroxybenzyl)-6-(D-ribitylimino)-5,6-dihydrouracil + 2-iminoacetate + 5'-deoxyadenosine + L-methionine + H(+). It participates in cofactor biosynthesis; coenzyme F0 biosynthesis. In terms of biological role, catalyzes the radical-mediated synthesis of 5-amino-5-(4-hydroxybenzyl)-6-(D-ribitylimino)-5,6-dihydrouracil from 5-amino-6-(D-ribitylamino)uracil and L-tyrosine. This chain is 5-amino-6-(D-ribitylamino)uracil--L-tyrosine 4-hydroxyphenyl transferase, found in Thermosynechococcus vestitus (strain NIES-2133 / IAM M-273 / BP-1).